Reading from the N-terminus, the 305-residue chain is MHYSVLLQESINDLNINPQGIYIDATFGRGGHSKAILNRLTTGRLIAFDKDLDAISYARENFQFSNFEIVHASFASIYDYCLQHSLLGKIDGIIMDLGVSSPQLDNAARGFSFTHNGPLDMRMDVSKGITASQALEELSVDDLSYIFKVYGEERFAKKIALRIKDYIQQNGSIRTTLELAELIRATIGKKEKKNPATRCFQALRIYVNNELKDLEALLENILAVIKSGGRIAAISFHSLEDRIVKQKFSALINPKQELNRITKMLPQDSSQIKLKWITKKSKANEDELNQNVRSRSAILRVVEKL.

S-adenosyl-L-methionine contacts are provided by residues 30–32, aspartate 49, phenylalanine 74, aspartate 96, and glutamine 103; that span reads GGH.

The protein belongs to the methyltransferase superfamily. RsmH family.

The protein resides in the cytoplasm. The catalysed reaction is cytidine(1402) in 16S rRNA + S-adenosyl-L-methionine = N(4)-methylcytidine(1402) in 16S rRNA + S-adenosyl-L-homocysteine + H(+). Specifically methylates the N4 position of cytidine in position 1402 (C1402) of 16S rRNA. This is Ribosomal RNA small subunit methyltransferase H from Francisella tularensis subsp. mediasiatica (strain FSC147).